Reading from the N-terminus, the 608-residue chain is Chaperone protein HtpG (608 aa).

Positions 1–332 (MQFQTEVNQL…VEDLPLNVSR (332 aa)) are a; substrate-binding. The interval 333 to 536 (EILQENQILK…KNKPDFAMQQ (204 aa)) is b. A c region spans residues 537–608 (LLKQMGQEQN…LTKIINKAFS (72 aa)).

This sequence belongs to the heat shock protein 90 family. As to quaternary structure, homodimer.

The protein resides in the cytoplasm. In terms of biological role, molecular chaperone. Has ATPase activity. This is Chaperone protein HtpG from Campylobacter jejuni subsp. jejuni serotype O:2 (strain ATCC 700819 / NCTC 11168).